The primary structure comprises 280 residues: Protoheme IX farnesyltransferase (280 aa).

9 helical membrane passes run 2–21 (VVATMLGGMWVASRYLRAGL), 30–50 (AAVPPAQLALALLGTVLVVSG), 83–103 (LALWFGIALSAASIPVLLVGV), 105–125 (ATTGVLAAAALLSYVLVYTPL), 131–151 (LSLPIGAIPGAIPPLLGWTSV), 160–180 (FLLFAVMFLWQIPHFLAISLF), 206–226 (IVGYLALLVLSSVLFVPLGVA), 229–249 (VYLGAAILLGGAFFGLGVYGL), and 260–280 (QVFFASMVYLVLLFAALMIGA).

The protein belongs to the UbiA prenyltransferase family. Protoheme IX farnesyltransferase subfamily.

It localises to the cell inner membrane. The catalysed reaction is heme b + (2E,6E)-farnesyl diphosphate + H2O = Fe(II)-heme o + diphosphate. The protein operates within porphyrin-containing compound metabolism; heme O biosynthesis; heme O from protoheme: step 1/1. Its function is as follows. Converts heme B (protoheme IX) to heme O by substitution of the vinyl group on carbon 2 of heme B porphyrin ring with a hydroxyethyl farnesyl side group. The chain is Protoheme IX farnesyltransferase from Sorangium cellulosum (strain So ce56) (Polyangium cellulosum (strain So ce56)).